Reading from the N-terminus, the 35-residue chain is Thionin NsW1 (35 aa).

Disulfide bonds link Cys-4–Cys-32, Cys-12–Cys-30, and Cys-16–Cys-26.

In terms of processing, contains 4 disulfide bonds.

It is found in the secreted. In terms of biological role, antimicrobial peptide disrupting membranes. Has antibacterial against Gram-positive bacteria S.aureus (MIC=6.5 uM) and B.subtilis (MIC=3.25 uM) but not against Gram-negative bacterium E.coli. Has antifungal activity against C.albicans (MIC=1.63 uM). The sequence is that of Thionin NsW1 from Nigella sativa (Black cumin).